We begin with the raw amino-acid sequence, 607 residues long: Glutamine--fructose-6-phosphate aminotransferase [isomerizing] (607 aa).

Catalysis depends on Cys-2, which acts as the Nucleophile; for GATase activity. Positions 2–217 (CGIIGILGKR…DGDWAVLTRE (216 aa)) constitute a Glutamine amidotransferase type-2 domain. SIS domains are found at residues 277–422 (TVRS…QRGF) and 455–597 (ICRN…VDQP). Catalysis depends on Lys-602, which acts as the For Fru-6P isomerization activity.

In terms of assembly, homodimer.

The protein resides in the cytoplasm. It carries out the reaction D-fructose 6-phosphate + L-glutamine = D-glucosamine 6-phosphate + L-glutamate. Its function is as follows. Catalyzes the first step in hexosamine metabolism, converting fructose-6P into glucosamine-6P using glutamine as a nitrogen source. This Bartonella henselae (strain ATCC 49882 / DSM 28221 / CCUG 30454 / Houston 1) (Rochalimaea henselae) protein is Glutamine--fructose-6-phosphate aminotransferase [isomerizing].